Here is a 393-residue protein sequence, read N- to C-terminus: Chalcone synthase (393 aa).

Cysteine 164 is a catalytic residue.

The protein belongs to the thiolase-like superfamily. Chalcone/stilbene synthases family.

It catalyses the reaction (E)-4-coumaroyl-CoA + 3 malonyl-CoA + 3 H(+) = 2',4,4',6'-tetrahydroxychalcone + 3 CO2 + 4 CoA. Its pathway is secondary metabolite biosynthesis; flavonoid biosynthesis. Functionally, the primary product of this enzyme is 4,2',4',6'-tetrahydroxychalcone (also termed naringenin-chalcone or chalcone) which can under specific conditions spontaneously isomerize into naringenin. The sequence is that of Chalcone synthase (CHS) from Vitis vinifera (Grape).